The following is a 423-amino-acid chain: Adenylosuccinate synthetase (423 aa).

GTP-binding positions include 12 to 18 (GDEGKGK) and 40 to 42 (GHT). The active-site Proton acceptor is Asp-13. The Mg(2+) site is built by Asp-13 and Gly-40. IMP contacts are provided by residues 13 to 16 (DEGK), 38 to 41 (NAGH), Thr-128, Arg-142, Gln-223, Thr-238, and Arg-302. His-41 serves as the catalytic Proton donor. Residue 298–304 (TTTGRPR) coordinates substrate. GTP contacts are provided by residues Arg-304, 330 to 332 (RLD), and 412 to 414 (CIG).

The protein belongs to the adenylosuccinate synthetase family. In terms of assembly, homodimer. The cofactor is Mg(2+).

It localises to the cytoplasm. The catalysed reaction is IMP + L-aspartate + GTP = N(6)-(1,2-dicarboxyethyl)-AMP + GDP + phosphate + 2 H(+). The protein operates within purine metabolism; AMP biosynthesis via de novo pathway; AMP from IMP: step 1/2. Its function is as follows. Plays an important role in the de novo pathway of purine nucleotide biosynthesis. Catalyzes the first committed step in the biosynthesis of AMP from IMP. The protein is Adenylosuccinate synthetase of Dehalococcoides mccartyi (strain ATCC BAA-2266 / KCTC 15142 / 195) (Dehalococcoides ethenogenes (strain 195)).